The chain runs to 151 residues: Transmembrane protein 239 (151 aa).

3 consecutive transmembrane segments (helical) span residues 61–81 (LWGL…HALF), 85–105 (SYLL…LLPA), and 116–138 (ALLF…GLLT).

Its subcellular location is the membrane. The sequence is that of Transmembrane protein 239 (Tmem239) from Mus musculus (Mouse).